A 1000-amino-acid chain; its full sequence is MEEYDLYGVEDDFESQFASELEVLAELEDDVSSRPGPQRSQLRTKLSFEEAISAGDPIRSNANSKPTGDSNGEALACIDTSKSKKRDASCIDFEEDEFSDSIYEPPITPKHKRARIEAVKKLDFGRDEYAGNSTALSDDITPPPSPNHSPKKNERDSKFSSCEAFEVSDMAPLQVTPTESEQKRVLKRPPVLEDYINVTSTDGSRVYMALKEDNDGAQQKQGNLKWNSGQQLHLLGVPFSYLKEQVNDEHRRKVLEESQRLTEMLNSQINEEFGENDSEILENDDNAGEEDDEDEPSSHSLWVDRFTPRHYTELLSDDYTNRCLLKWLKLWDTVVFGKERVVRKPKAIVDPRANHFKNQKEQQSKFKTKAQITEEILEAELDHHNRPKNKVSLLCGPPGLGKTTLAHVIARHAGYNVVEMNASDDRSPEAFRTRIEAATQMKSVLGVDERPNCLIIDEIDGAPTVSINMLLSLVNRKDAKEAEGGTEATTGKKKKKEGGLLLRPIICICNDQYVPSLRQLRQQAFMLNFPQTMPSRLVQRLYEIAVKQGMKADTGALMALCEKTENDIRSCINTLQFLHGRGKKELNMRSVQTMRIGLKDQNKGLFSVWQEIFQLPKIQRKRIGQEVATNDLHLLLGSENDSLGMLAKPPLNAVAQRFHHILHLSTSTGEYEKLTMGLYDNFLNMKVKESNFSTVCLALDWLEFTDIVNSTIMHGQNFQLMRYLPFLPVAFHLLFAASNVPRIAYPSSHYEAQSKLNQMQNLLNAMVSEISPAIRTRVGPQSLVLDALCLLLDVLSPKLRPVNTQLFSTKEKQQLAELINTMLAYNLTYHQERTMEGQYVYKLDPNVEDVCRFPDLPVRKPLTYQTKQLIAREIELERMRRTEAFQQARNAGRDNTTAAAAVKTADPKGAKSAAKPAALNHEQRLENIMKKATFEEKPEKDFFGRQIVKKVAAPVTASANQEESVERRIGKAVGNSDVWFRFNEGVSNAVRRNIYIKDLL.

Disordered regions lie at residues 53–89, 130–159, and 272–301; these read SAGD…RDAS, AGNS…DSKF, and EFGE…SHSL. Polar residues predominate over residues 60 to 70; it reads SNANSKPTGDS. The span at 272 to 295 shows a compositional bias: acidic residues; it reads EFGENDSEILENDDNAGEEDDEDE. Residue 396–403 coordinates ATP; the sequence is GPPGLGKT. Polar residues predominate over residues 888-898; it reads ARNAGRDNTTA. The disordered stretch occupies residues 888–916; sequence ARNAGRDNTTAAAAVKTADPKGAKSAAKP.

Belongs to the activator 1 small subunits family. CTF18 subfamily. In terms of assembly, component of the CTF18-RFC complex, which consists of ctf18, ctf8, dcc1, rfc2, rfc3, rfc4 and rfc5. The CTF18-RFC complex associates with pcna.

The protein localises to the nucleus. Its function is as follows. Chromosome cohesion factor involved in sister chromatid cohesion and fidelity of chromosome transmission. Component of one of the cell nuclear antigen loader complexes, CTF18-replication factor C (CTF18-RFC), which consists of ctf18, ctf8, dcc1, rfc2, rfc3, rfc4 and rfc5. The CTF18-RFC complex binds to single-stranded and primed DNAs and has weak ATPase activity that is stimulated by the presence of primed DNA, replication protein A (RPA) and by proliferating cell nuclear antigen (pcna). The CTF18-RFC complex catalyzes the ATP-dependent loading of pcna onto primed and gapped DNA. The chain is Chromosome transmission fidelity protein 18 homolog (chtf18) from Xenopus laevis (African clawed frog).